The sequence spans 556 residues: ATP synthase subunit beta-2, mitochondrial (556 aa).

A compositionally biased stretch (low complexity) spans 1 to 20 (MASRRVLSSLLRSSSGRSAA). Residues 1 to 37 (MASRRVLSSLLRSSSGRSAAKLVNRNPRLPSPSPARH) form a disordered region. The N-terminal 51 residues, 1 to 51 (MASRRVLSSLLRSSSGRSAAKLVNRNPRLPSPSPARHAAPCSYLLGRVAEY), are a transit peptide targeting the mitochondrion. Position 59 is a phosphoserine (S59). 231–238 (GGAGVGKT) is an ATP binding site.

This sequence belongs to the ATPase alpha/beta chains family. As to quaternary structure, F-type ATPases have 2 components, CF(1) - the catalytic core - and CF(0) - the membrane proton channel. CF(1) has five subunits: alpha(3), beta(3), gamma(1), delta(1), epsilon(1). CF(0) has three main subunits: a, b and c.

It localises to the mitochondrion. The protein localises to the mitochondrion inner membrane. It carries out the reaction ATP + H2O + 4 H(+)(in) = ADP + phosphate + 5 H(+)(out). Functionally, mitochondrial membrane ATP synthase (F(1)F(0) ATP synthase or Complex V) produces ATP from ADP in the presence of a proton gradient across the membrane which is generated by electron transport complexes of the respiratory chain. F-type ATPases consist of two structural domains, F(1) - containing the extramembraneous catalytic core, and F(0) - containing the membrane proton channel, linked together by a central stalk and a peripheral stalk. During catalysis, ATP synthesis in the catalytic domain of F(1) is coupled via a rotary mechanism of the central stalk subunits to proton translocation. Subunits alpha and beta form the catalytic core in F(1). Rotation of the central stalk against the surrounding alpha(3)beta(3) subunits leads to hydrolysis of ATP in three separate catalytic sites on the beta subunits. The polypeptide is ATP synthase subunit beta-2, mitochondrial (Arabidopsis thaliana (Mouse-ear cress)).